Here is a 147-residue protein sequence, read N- to C-terminus: MKALLILGLLLLSVAVQGKTFKRCELAKTLKNLGLAGYKGVSLANWMCLAKGESNYNTQAKNYNPGSKSTDYGIFQINSKWWCNDGKTPKAVNGCGVSCSALLKDDITQAVACAKKIVSQQGITAWVAWKNKCRNRDLTSYVKGCGV.

The signal sequence occupies residues 1–18 (MKALLILGLLLLSVAVQG). One can recognise a C-type lysozyme domain in the interval 19 to 147 (KTFKRCELAK…LTSYVKGCGV (129 aa)). Disulfide bonds link C24–C145, C48–C133, C83–C99, and C95–C113. Active-site residues include E53 and D71.

It belongs to the glycosyl hydrolase 22 family. In terms of assembly, monomer. In terms of tissue distribution, trachea.

The enzyme catalyses Hydrolysis of (1-&gt;4)-beta-linkages between N-acetylmuramic acid and N-acetyl-D-glucosamine residues in a peptidoglycan and between N-acetyl-D-glucosamine residues in chitodextrins.. In terms of biological role, lysozymes have primarily a bacteriolytic function; those in tissues and body fluids are associated with the monocyte-macrophage system and enhance the activity of immunoagents. This chain is Lysozyme C, tracheal isozyme, found in Bos taurus (Bovine).